Reading from the N-terminus, the 1218-residue chain is Probable cation-transporting ATPase 13A5 (1218 aa).

Transmembrane regions (helical) follow at residues 33–53 (KAFCLVASVLTCGGLLLVFYW), 222–242 (GYIEYSVAIIILTVISIVLSV), 401–421 (FIVFLACLGVMGFFYALGVYM), and 433–453 (MALILLTVTVPPVLPAALTIG). D486 (4-aspartylphosphate intermediate) is an active-site residue. Residues N540, N669, and N819 are each glycosylated (N-linked (GlcNAc...) asparagine). Mg(2+) contacts are provided by D850 and D854. 6 helical membrane passes run 903 to 923 (FGVFKYLTMYGIIQFISALLL), 940 to 956 (VAITLMVCLTMSSTHAY), 973 to 993 (LLLSIFLNSCFSCIVQISAFL), 1042 to 1062 (FETTTLWPITTINYITVAFIF), 1077 to 1097 (IFSFLLLAALGLTIFILFSDF), and 1115 to 1135 (VLILVVALTQFCVAFFVEDSI).

This sequence belongs to the cation transport ATPase (P-type) (TC 3.A.3) family. Type V subfamily.

Its subcellular location is the membrane. It carries out the reaction ATP + H2O = ADP + phosphate + H(+). The sequence is that of Probable cation-transporting ATPase 13A5 (ATP13A5) from Homo sapiens (Human).